Reading from the N-terminus, the 429-residue chain is Cell cycle protein kinase spo4 (429 aa).

Positions 40 to 402 constitute a Protein kinase domain; sequence YHVVKLVGAG…KAKTALQHEF (363 aa). Residues 46–54 and Lys-95 each bind ATP; that span reads VGAGSFSSV. The active-site Proton acceptor is Asp-182. The residue at position 264 (Thr-264) is a Phosphothreonine.

The protein belongs to the protein kinase superfamily. Ser/Thr protein kinase family. CDC7 subfamily. As to quaternary structure, interacts with spo6.

It is found in the nucleus. It carries out the reaction L-seryl-[protein] + ATP = O-phospho-L-seryl-[protein] + ADP + H(+). It catalyses the reaction L-threonyl-[protein] + ATP = O-phospho-L-threonyl-[protein] + ADP + H(+). In terms of biological role, required for the initiation of meiosis II and progression through anaphase II. This Schizosaccharomyces pombe (strain 972 / ATCC 24843) (Fission yeast) protein is Cell cycle protein kinase spo4 (spo4).